A 435-amino-acid chain; its full sequence is Ribosomal protein uS12 methylthiotransferase RimO (435 aa).

The MTTase N-terminal domain maps to 3–113; it reads HKVGFVSLGC…VVNAVHQYLP (111 aa). Residues C12, C48, C77, C144, C148, and C151 each contribute to the [4Fe-4S] cluster site. A Radical SAM core domain is found at 130-367; sequence LTPRHYAYLK…MQVQAEISRN (238 aa). In terms of domain architecture, TRAM spans 370–435; that stretch reads KNKIGSTQTV…DDYDLYASLV (66 aa).

This sequence belongs to the methylthiotransferase family. RimO subfamily. Requires [4Fe-4S] cluster as cofactor.

The protein localises to the cytoplasm. The catalysed reaction is L-aspartate(89)-[ribosomal protein uS12]-hydrogen + (sulfur carrier)-SH + AH2 + 2 S-adenosyl-L-methionine = 3-methylsulfanyl-L-aspartate(89)-[ribosomal protein uS12]-hydrogen + (sulfur carrier)-H + 5'-deoxyadenosine + L-methionine + A + S-adenosyl-L-homocysteine + 2 H(+). Its function is as follows. Catalyzes the methylthiolation of an aspartic acid residue of ribosomal protein uS12. This Legionella pneumophila subsp. pneumophila (strain Philadelphia 1 / ATCC 33152 / DSM 7513) protein is Ribosomal protein uS12 methylthiotransferase RimO.